We begin with the raw amino-acid sequence, 119 residues long: UPF0344 protein lp_1373 (119 aa).

A run of 4 helical transmembrane segments spans residues 1 to 21 (MYLL…AIGL), 32 to 52 (FLIL…ALAI), 60 to 80 (WLTL…EVAF), and 92 to 112 (LVTL…GLHW).

Belongs to the UPF0344 family.

It localises to the cell membrane. The protein is UPF0344 protein lp_1373 of Lactiplantibacillus plantarum (strain ATCC BAA-793 / NCIMB 8826 / WCFS1) (Lactobacillus plantarum).